The following is a 199-amino-acid chain: GTP cyclohydrolase-2 (199 aa).

Position 49–53 (Arg-49–Glu-53) interacts with GTP. Zn(2+) is bound by residues Cys-54, Cys-65, and Cys-67. GTP is bound by residues Gln-70, Glu-92–Arg-94, and Thr-114. The active-site Proton acceptor is the Asp-126. Arg-128 acts as the Nucleophile in catalysis. Thr-149 and Lys-154 together coordinate GTP.

The protein belongs to the GTP cyclohydrolase II family. Homodimer. Zn(2+) is required as a cofactor.

It catalyses the reaction GTP + 4 H2O = 2,5-diamino-6-hydroxy-4-(5-phosphoribosylamino)-pyrimidine + formate + 2 phosphate + 3 H(+). It functions in the pathway cofactor biosynthesis; riboflavin biosynthesis; 5-amino-6-(D-ribitylamino)uracil from GTP: step 1/4. Functionally, catalyzes the conversion of GTP to 2,5-diamino-6-ribosylamino-4(3H)-pyrimidinone 5'-phosphate (DARP), formate and pyrophosphate. The sequence is that of GTP cyclohydrolase-2 from Blochmanniella pennsylvanica (strain BPEN).